The chain runs to 236 residues: Small ribosomal subunit protein uS2c (236 aa).

The protein belongs to the universal ribosomal protein uS2 family.

It is found in the plastid. The protein localises to the chloroplast. The sequence is that of Small ribosomal subunit protein uS2c (rps2) from Barbarea verna (Land cress).